Consider the following 227-residue polypeptide: 2,3-bisphosphoglycerate-dependent phosphoglycerate mutase (227 aa).

Residues 7–14 (RHGLSEWN), 20–21 (TG), arginine 59, 86–89 (ERHY), lysine 97, 113–114 (RR), and 182–183 (GN) contribute to the substrate site. The active-site Tele-phosphohistidine intermediate is the histidine 8. Residue glutamate 86 is the Proton donor/acceptor of the active site.

This sequence belongs to the phosphoglycerate mutase family. BPG-dependent PGAM subfamily. In terms of assembly, homodimer.

The enzyme catalyses (2R)-2-phosphoglycerate = (2R)-3-phosphoglycerate. It participates in carbohydrate degradation; glycolysis; pyruvate from D-glyceraldehyde 3-phosphate: step 3/5. In terms of biological role, catalyzes the interconversion of 2-phosphoglycerate and 3-phosphoglycerate. The polypeptide is 2,3-bisphosphoglycerate-dependent phosphoglycerate mutase (Actinobacillus succinogenes (strain ATCC 55618 / DSM 22257 / CCUG 43843 / 130Z)).